The sequence spans 358 residues: Cyclin-dependent kinase 11 (358 aa).

The 285-residue stretch at 52–336 (FKKLYTINEG…ASDALKHPYF (285 aa)) folds into the Protein kinase domain. ATP is bound by residues 58–66 (INEGAFGVV) and K81. Catalysis depends on D176, which acts as the Proton acceptor.

This sequence belongs to the protein kinase superfamily. CMGC Ser/Thr protein kinase family. CDC2/CDKX subfamily.

It carries out the reaction L-seryl-[protein] + ATP = O-phospho-L-seryl-[protein] + ADP + H(+). The catalysed reaction is L-threonyl-[protein] + ATP = O-phospho-L-threonyl-[protein] + ADP + H(+). The polypeptide is Cyclin-dependent kinase 11 (cdk11) (Dictyostelium discoideum (Social amoeba)).